We begin with the raw amino-acid sequence, 208 residues long: MAVTVVNHPLVKHKLGILRQHDVPVSEFRAISNEICRLLTYEATKDLETEKVTIQGWAGPVEVDQIRGKKITVVPILRAGLGMLDGLLDMIPGAKVSVVGMFRNEETLEPVKYYVKLAKNIEERMAIIIDPMLATGGTLNATIDLLKEAGCPQIKGLFLVAAPEGIKKVVDRHPDVDIYVAAVDERLNEHGYILPGLGDAGDKIFGTK.

5-phospho-alpha-D-ribose 1-diphosphate is bound by residues R78, R103, and 130–138 (DPMLATGGT). Uracil-binding positions include I193 and 198–200 (GDA). Residue D199 participates in 5-phospho-alpha-D-ribose 1-diphosphate binding.

Belongs to the UPRTase family. Requires Mg(2+) as cofactor.

The enzyme catalyses UMP + diphosphate = 5-phospho-alpha-D-ribose 1-diphosphate + uracil. The protein operates within pyrimidine metabolism; UMP biosynthesis via salvage pathway; UMP from uracil: step 1/1. Its activity is regulated as follows. Allosterically activated by GTP. Catalyzes the conversion of uracil and 5-phospho-alpha-D-ribose 1-diphosphate (PRPP) to UMP and diphosphate. This chain is Uracil phosphoribosyltransferase, found in Nitratidesulfovibrio vulgaris (strain DSM 19637 / Miyazaki F) (Desulfovibrio vulgaris).